The following is a 189-amino-acid chain: Small ribosomal subunit protein uS4 (189 aa).

One can recognise an S4 RNA-binding domain in the interval 107–181; sequence RRLQTQVFKL…VKRRTLRKGD (75 aa). Residues 161–189 form a disordered region; it reads QSPYGGGRPGRVKRRTLRKGDGAGGDDEE.

Belongs to the universal ribosomal protein uS4 family. As to quaternary structure, component of the small ribosomal subunit. Part of the small subunit (SSU) processome, composed of more than 70 proteins and the RNA chaperone small nucleolar RNA (snoRNA) U3.

The protein resides in the cytoplasm. Its subcellular location is the nucleus. The protein localises to the nucleolus. Its function is as follows. Component of the small ribosomal subunit. The ribosome is a large ribonucleoprotein complex responsible for the synthesis of proteins in the cell. Part of the small subunit (SSU) processome, first precursor of the small eukaryotic ribosomal subunit. During the assembly of the SSU processome in the nucleolus, many ribosome biogenesis factors, an RNA chaperone and ribosomal proteins associate with the nascent pre-rRNA and work in concert to generate RNA folding, modifications, rearrangements and cleavage as well as targeted degradation of pre-ribosomal RNA by the RNA exosome. This is Small ribosomal subunit protein uS4 (rps-9) from Caenorhabditis elegans.